Here is a 257-residue protein sequence, read N- to C-terminus: MPHLVLDKISIHYDGQPAPAVERVSIDVAGDDFVVLVGRSGCGKTSLLNVAAGLVTPARGSATINGRPITAPGSDRAVVFQNDALFPWLTARENVAFALRLRGVRPAERARRADELLALVKLGDAGDKRIWELSGGMRQRVGLARALAAEPQFLLLDEPLGALDALTRERMQTTLLDLWTASHAGVLMVTHGIEEALVLATRIVVLAPGPGRVVRTFEPGFSRRYAAGEPIRAIKADPAFATARGELTDAIFEGETA.

The 228-residue stretch at 6-233 (LDKISIHYDG…RYAAGEPIRA (228 aa)) folds into the ABC transporter domain. 38–45 (GRSGCGKT) contacts ATP.

Belongs to the ABC transporter superfamily. Taurine importer (TC 3.A.1.17.1) family. As to quaternary structure, the complex is composed of two ATP-binding proteins (TauB), two transmembrane proteins (TauC) and a solute-binding protein (TauA).

The protein localises to the cell inner membrane. The enzyme catalyses taurine(out) + ATP + H2O = taurine(in) + ADP + phosphate + H(+). Functionally, part of the ABC transporter complex TauABC involved in taurine import. Responsible for energy coupling to the transport system. The polypeptide is Taurine import ATP-binding protein TauB (Mesorhizobium japonicum (strain LMG 29417 / CECT 9101 / MAFF 303099) (Mesorhizobium loti (strain MAFF 303099))).